A 364-amino-acid chain; its full sequence is Dual-specificity RNA methyltransferase RlmN (364 aa).

Catalysis depends on E91, which acts as the Proton acceptor. The region spanning 97 to 333 is the Radical SAM core domain; that stretch reads ESDRGTLCIS…VTVRKTRGDD (237 aa). C104 and C338 are oxidised to a cystine. The [4Fe-4S] cluster site is built by C111, C115, and C118. Residues 164-165, S196, 218-220, and N295 contribute to the S-adenosyl-L-methionine site; these read GE and SLH. Catalysis depends on C338, which acts as the S-methylcysteine intermediate.

It belongs to the radical SAM superfamily. RlmN family. Requires [4Fe-4S] cluster as cofactor.

The protein resides in the cytoplasm. The catalysed reaction is adenosine(2503) in 23S rRNA + 2 reduced [2Fe-2S]-[ferredoxin] + 2 S-adenosyl-L-methionine = 2-methyladenosine(2503) in 23S rRNA + 5'-deoxyadenosine + L-methionine + 2 oxidized [2Fe-2S]-[ferredoxin] + S-adenosyl-L-homocysteine. The enzyme catalyses adenosine(37) in tRNA + 2 reduced [2Fe-2S]-[ferredoxin] + 2 S-adenosyl-L-methionine = 2-methyladenosine(37) in tRNA + 5'-deoxyadenosine + L-methionine + 2 oxidized [2Fe-2S]-[ferredoxin] + S-adenosyl-L-homocysteine. Specifically methylates position 2 of adenine 2503 in 23S rRNA and position 2 of adenine 37 in tRNAs. m2A2503 modification seems to play a crucial role in the proofreading step occurring at the peptidyl transferase center and thus would serve to optimize ribosomal fidelity. The polypeptide is Dual-specificity RNA methyltransferase RlmN (Neisseria meningitidis serogroup A / serotype 4A (strain DSM 15465 / Z2491)).